Consider the following 41-residue polypeptide: Large ribosomal subunit protein bL36B (41 aa).

The protein belongs to the bacterial ribosomal protein bL36 family.

In Neisseria meningitidis serogroup B (strain ATCC BAA-335 / MC58), this protein is Large ribosomal subunit protein bL36B.